A 218-amino-acid polypeptide reads, in one-letter code: Adenylate kinase (218 aa).

10–15 (GAGKGT) contributes to the ATP binding site. Residues 30-59 (STGDIFREAIAKGTELGRKVQDIVNSGNLV) are NMP. Residues threonine 31, arginine 36, 57-59 (NLV), 85-88 (GYPR), and glutamine 92 each bind AMP. The LID stretch occupies residues 126–163 (TRRVCSKCGKVYNVITLPSKVEGICDDCGGTLIQRDDD). Arginine 127 is an ATP binding site. The Zn(2+) site is built by cysteine 130 and cysteine 133. ATP is bound at residue 136–137 (VY). Positions 150 and 153 each coordinate Zn(2+). Positions 160 and 171 each coordinate AMP. Lysine 199 provides a ligand contact to ATP.

The protein belongs to the adenylate kinase family. Monomer.

It localises to the cytoplasm. It catalyses the reaction AMP + ATP = 2 ADP. Its pathway is purine metabolism; AMP biosynthesis via salvage pathway; AMP from ADP: step 1/1. Its function is as follows. Catalyzes the reversible transfer of the terminal phosphate group between ATP and AMP. Plays an important role in cellular energy homeostasis and in adenine nucleotide metabolism. The polypeptide is Adenylate kinase (Fervidobacterium nodosum (strain ATCC 35602 / DSM 5306 / Rt17-B1)).